A 141-amino-acid polypeptide reads, in one-letter code: Hemoglobin subunit alpha-D (141 aa).

Residues 1 to 141 (MLTADDKKIL…VAAVLAEKYR (141 aa)) form the Globin domain. 2 residues coordinate heme b: His-58 and His-87.

Belongs to the globin family. In terms of assembly, heterotetramer of two alpha-D chains and two beta chains. In terms of tissue distribution, red blood cells.

In terms of biological role, involved in oxygen transport from the lung to the various peripheral tissues. The polypeptide is Hemoglobin subunit alpha-D (HBAD) (Branta canadensis (Canada goose)).